The sequence spans 432 residues: MTTTAPAPQVYGGDEVATLVIDTGSSYTRVGYAGEDTPKLVVSTECGLMADEDVEMEDDTSNTTKKLNKYKVGDSANLPLPNMEVLHPLTDGIVADWDAVQNIWEYSLARLNADTKTHPLMLTEPCWNTQANKLKALEIAFESLEVPASYLVKDAVASAFAAGKGNALVLDVGSEVASVTPVIDGLVLYKPARRSQYAGDYLDRQIKKVLVSRGIDLTPRFEIKNKKAVEMGEPPVFTKRELPNVTHSFTDLQVSRILSEFKDSMCQVNDVPLTPEISGEAADRVFEFPTGYSTTFGADRLSTSESLFKPSEYPFDGETVPDTARGLSEMVVDTINASNVDVRAHLANNIVITGGGSLVQGLSDRVSKDVTQALSGLKVRVAAASNQEERRHGAWIGGSVLGSLGSFHQLWVSKQEWQEKGGDYLVEKKRFK.

Belongs to the actin family. ARP4 subfamily. As to quaternary structure, component of the NuA4 histone acetyltransferase complex, of the INO80 chromatin remodeling complex, and of the SWR1 chromatin remodeling complex.

Its subcellular location is the nucleus. Its function is as follows. Chromatin interaction component of the NuA4 histone acetyltransferase complex which is involved in transcriptional activation of selected genes principally by acetylation of nucleosomal histone H4 and H2A. The NuA4 complex is also involved in DNA repair. Is required for NuA4 complex integrity. Component of the SWR1 complex which mediates the ATP-dependent exchange of histone H2A for the H2A variant HZT1 leading to transcriptional regulation of selected genes by chromatin remodeling. Component of the INO80 complex which remodels chromatin by shifting nucleosomes and is involved in DNA repair. The chain is Actin-related protein 4 (ARP4) from Yarrowia lipolytica (strain CLIB 122 / E 150) (Yeast).